Consider the following 318-residue polypeptide: Actin-related protein 2/3 complex subunit 2A (318 aa).

A disordered region spans residues 297–318 (RSMNNKSFKRLGLNEVNHTNSK).

This sequence belongs to the ARPC2 family. As to quaternary structure, component of the Arp2/3 complex composed of ARP2, ARP3, ARPC1/p41-ARC, ARPC2/p34-ARC, ARPC3/p21-ARC, ARPC4/p20-ARC and ARPC5/p16-ARC. Interacts with ARPC4. As to expression, expressed at low levels in all tissues with a relatively highest expression in inflorescences.

It localises to the cytoplasm. Its subcellular location is the cytoskeleton. The protein localises to the cell projection. Functions as actin-binding component of the Arp2/3 complex which is involved in regulation of actin polymerization and together with an activating nucleation-promoting factor (NPF) mediates the formation of branched actin networks. Seems to contact the mother actin filament. Arp2/3 complex plays a critical role in the control of cell morphogenesis via the modulation of cell polarity development. The chain is Actin-related protein 2/3 complex subunit 2A (ARPC2A) from Arabidopsis thaliana (Mouse-ear cress).